The primary structure comprises 238 residues: tRNA (guanine-N(1)-)-methyltransferase (238 aa).

Residues Gly-108 and 127-132 (LGDFVL) each bind S-adenosyl-L-methionine.

It belongs to the RNA methyltransferase TrmD family. As to quaternary structure, homodimer.

It localises to the cytoplasm. It catalyses the reaction guanosine(37) in tRNA + S-adenosyl-L-methionine = N(1)-methylguanosine(37) in tRNA + S-adenosyl-L-homocysteine + H(+). Specifically methylates guanosine-37 in various tRNAs. This is tRNA (guanine-N(1)-)-methyltransferase from Streptococcus uberis (strain ATCC BAA-854 / 0140J).